The primary structure comprises 302 residues: Putative thiol protease R355 (302 aa).

Active-site residues include histidine 182 and aspartate 199. Cysteine 244 serves as the catalytic Nucleophile.

This sequence belongs to the peptidase C48 family.

The protein resides in the virion. The chain is Putative thiol protease R355 from Acanthamoeba polyphaga mimivirus (APMV).